Here is a 393-residue protein sequence, read N- to C-terminus: S-adenosylmethionine synthase 1 (393 aa).

Glu9 is a Mg(2+) binding site. His15 is a binding site for ATP. Residue Glu43 participates in K(+) binding. Residues Glu56 and Gln99 each coordinate L-methionine. Residues 167–169 (DGK), 235–238 (SGRF), Asp246, 252–253 (RK), Ala269, Lys273, and Lys277 each bind ATP. Asp246 serves as a coordination point for L-methionine. Residue Lys277 coordinates L-methionine.

This sequence belongs to the AdoMet synthase family. In terms of assembly, homotetramer. The cofactor is Mn(2+). Requires Mg(2+) as cofactor. It depends on Co(2+) as a cofactor. K(+) is required as a cofactor. Mostly expressed in stems.

The protein resides in the cytoplasm. The catalysed reaction is L-methionine + ATP + H2O = S-adenosyl-L-methionine + phosphate + diphosphate. Its pathway is amino-acid biosynthesis; S-adenosyl-L-methionine biosynthesis; S-adenosyl-L-methionine from L-methionine: step 1/1. Catalyzes the formation of S-adenosylmethionine from methionine and ATP. The reaction comprises two steps that are both catalyzed by the same enzyme: formation of S-adenosylmethionine (AdoMet) and triphosphate, and subsequent hydrolysis of the triphosphate. This Solanum lycopersicum (Tomato) protein is S-adenosylmethionine synthase 1 (SAM1).